We begin with the raw amino-acid sequence, 96 residues long: Redox-responsive transcriptional regulator WhiB3 (96 aa).

Residues 22–86 (LCRGVDSSMF…GGLSESEREL (65 aa)) enclose the 4Fe-4S Wbl-type domain. C23, C53, C56, and C62 together coordinate [4Fe-4S] cluster.

The protein belongs to the WhiB family. Requires [4Fe-4S] cluster as cofactor. In terms of processing, the Fe-S cluster can be nitrosylated by nitric oxide (NO). Upon Fe-S cluster removal intramolecular disulfide bonds are formed.

The protein localises to the cytoplasm. Functionally, a redox-sensitive transcriptional regulator. Maintains intracellular redox homeostasis by regulating catabolic metabolism and polyketide biosynthesis. Regulates expression of the redox buffer ergothioneine (ERG). In concert with myothiol (MSH), another redox buffer, responds to low pH leading to acid resistance. The apo- but not holo-form probably binds DNA. The sequence is that of Redox-responsive transcriptional regulator WhiB3 (whiB3) from Mycolicibacterium smegmatis (strain ATCC 700084 / mc(2)155) (Mycobacterium smegmatis).